Consider the following 560-residue polypeptide: Dihydroxy-acid dehydratase (560 aa).

Cys-50 contributes to the [2Fe-2S] cluster binding site. Asp-82 is a binding site for Mg(2+). Cys-123 contributes to the [2Fe-2S] cluster binding site. Positions 124 and 125 each coordinate Mg(2+). At Lys-125 the chain carries N6-carboxylysine. Cys-195 is a [2Fe-2S] cluster binding site. Glu-447 provides a ligand contact to Mg(2+). Catalysis depends on Ser-473, which acts as the Proton acceptor.

The protein belongs to the IlvD/Edd family. In terms of assembly, homodimer. It depends on [2Fe-2S] cluster as a cofactor. Mg(2+) is required as a cofactor.

The enzyme catalyses (2R)-2,3-dihydroxy-3-methylbutanoate = 3-methyl-2-oxobutanoate + H2O. It catalyses the reaction (2R,3R)-2,3-dihydroxy-3-methylpentanoate = (S)-3-methyl-2-oxopentanoate + H2O. The protein operates within amino-acid biosynthesis; L-isoleucine biosynthesis; L-isoleucine from 2-oxobutanoate: step 3/4. It functions in the pathway amino-acid biosynthesis; L-valine biosynthesis; L-valine from pyruvate: step 3/4. In terms of biological role, functions in the biosynthesis of branched-chain amino acids. Catalyzes the dehydration of (2R,3R)-2,3-dihydroxy-3-methylpentanoate (2,3-dihydroxy-3-methylvalerate) into 2-oxo-3-methylpentanoate (2-oxo-3-methylvalerate) and of (2R)-2,3-dihydroxy-3-methylbutanoate (2,3-dihydroxyisovalerate) into 2-oxo-3-methylbutanoate (2-oxoisovalerate), the penultimate precursor to L-isoleucine and L-valine, respectively. In Methylibium petroleiphilum (strain ATCC BAA-1232 / LMG 22953 / PM1), this protein is Dihydroxy-acid dehydratase.